The chain runs to 398 residues: Acetate kinase (398 aa).

Asn-9 provides a ligand contact to Mg(2+). ATP is bound at residue Lys-16. A substrate-binding site is contributed by Arg-89. Residue Asp-146 is the Proton donor/acceptor of the active site. ATP is bound by residues 206 to 210 (HLGNG), 281 to 283 (DCR), and 329 to 333 (GIGEN). Glu-384 is a Mg(2+) binding site.

This sequence belongs to the acetokinase family. Homodimer. It depends on Mg(2+) as a cofactor. Mn(2+) is required as a cofactor.

It localises to the cytoplasm. It catalyses the reaction acetate + ATP = acetyl phosphate + ADP. The protein operates within metabolic intermediate biosynthesis; acetyl-CoA biosynthesis; acetyl-CoA from acetate: step 1/2. Catalyzes the formation of acetyl phosphate from acetate and ATP. Can also catalyze the reverse reaction. This chain is Acetate kinase, found in Vibrio campbellii (strain ATCC BAA-1116).